Reading from the N-terminus, the 284-residue chain is Avenin-like b11 (284 aa).

An N-terminal signal peptide occupies residues 1–18 (MKVFILALLALTATTAIA).

Belongs to the prolamin family. Post-translationally, contains disulfide bonds.

In terms of biological role, seed storage protein. Might be integrated via inter-chain disulfide bonds within the glutenin polymer. The polypeptide is Avenin-like b11 (Triticum aestivum (Wheat)).